The following is a 644-amino-acid chain: 3D-(3,5/4)-trihydroxycyclohexane-1,2-dione hydrolase 2 (644 aa).

E65 provides a ligand contact to thiamine diphosphate. A thiamine pyrophosphate binding region spans residues 442-522; that stretch reads SLPGDLQRMW…INVLLFDNSG (81 aa). Residues D493 and N520 each contribute to the Mg(2+) site.

The protein belongs to the TPP enzyme family. Mg(2+) is required as a cofactor. The cofactor is thiamine diphosphate.

It catalyses the reaction 3D-3,5/4-trihydroxycyclohexane-1,2-dione + H2O = 5-deoxy-D-glucuronate + H(+). Its pathway is polyol metabolism; myo-inositol degradation into acetyl-CoA; acetyl-CoA from myo-inositol: step 3/7. In terms of biological role, involved in the cleavage of the C1-C2 bond of 3D-(3,5/4)-trihydroxycyclohexane-1,2-dione (THcHDO) to yield 5-deoxy-glucuronate (5DG). The chain is 3D-(3,5/4)-trihydroxycyclohexane-1,2-dione hydrolase 2 from Bacillus cereus (strain ZK / E33L).